The primary structure comprises 157 residues: Small ribosomal subunit protein uS7 (157 aa).

This sequence belongs to the universal ribosomal protein uS7 family. Part of the 30S ribosomal subunit. Contacts proteins S9 and S11.

In terms of biological role, one of the primary rRNA binding proteins, it binds directly to 16S rRNA where it nucleates assembly of the head domain of the 30S subunit. Is located at the subunit interface close to the decoding center, probably blocks exit of the E-site tRNA. This is Small ribosomal subunit protein uS7 from Borrelia duttonii (strain Ly).